A 239-amino-acid polypeptide reads, in one-letter code: Lytic polysaccharide monooxygenase-like protein X325 (239 aa).

A signal peptide spans 1-24; sequence MVLPSSVSQWAALIALLCAGLANA. Residue His-25 participates in Cu(2+) binding. Residues Asn-41, Asn-56, Asn-79, Asn-117, Asn-150, and Asn-197 are each glycosylated (N-linked (GlcNAc...) asparagine). 2 disulfides stabilise this stretch: Cys-71-Cys-176 and Cys-141-Cys-195. Residue Ser-214 is the site of GPI-anchor amidated serine attachment. A propeptide spans 215–239 (removed in mature form); the sequence is AAAPKSSLMSVLPVYMVALLSWAMM.

Belongs to the X325 family. The cofactor is Cu(2+).

The protein resides in the cell membrane. Its function is as follows. Lytic polysaccharide monooxygenase-like protein that has diverged to biological functions other than polysaccharide degradation since it does not perform oxidative cleavage of polysaccharides. Acts as a cell surface-bound protein that functions in the copper-accumulation pathway. May also act as the major cell wall sensor that regulates MAP kinase-dependent hyphal anastomosis, the fusion of hyphal cells. This Aspergillus fumigatus (strain ATCC MYA-4609 / CBS 101355 / FGSC A1100 / Af293) (Neosartorya fumigata) protein is Lytic polysaccharide monooxygenase-like protein X325.